Here is a 188-residue protein sequence, read N- to C-terminus: Large ribosomal subunit protein uL6 (188 aa).

The protein belongs to the universal ribosomal protein uL6 family.

The polypeptide is Large ribosomal subunit protein uL6 (RPL9) (Tetrahymena thermophila (strain SB210)).